Reading from the N-terminus, the 238-residue chain is DnaA regulatory inactivator Hda (238 aa).

The protein belongs to the DnaA family. HdA subfamily. In terms of assembly, the active form seems to be an ADP-bound monomer. Forms the RIDA complex (regulatory inactivation of DnaA) of ATP-DnaA, ADP-Hda and the DNA-loaded beta sliding clamp (dnaN).

Mediates the interaction of DNA replication initiator protein DnaA with DNA polymerase subunit beta sliding clamp (dnaN). Stimulates hydrolysis of ATP-DnaA to ADP-DnaA, rendering DnaA inactive for reinitiation, a process called regulatory inhibition of DnaA or RIDA. The chain is DnaA regulatory inactivator Hda from Pectobacterium atrosepticum (strain SCRI 1043 / ATCC BAA-672) (Erwinia carotovora subsp. atroseptica).